Reading from the N-terminus, the 125-residue chain is Ribonuclease P protein component (125 aa).

Belongs to the RnpA family. In terms of assembly, consists of a catalytic RNA component (M1 or rnpB) and a protein subunit.

The catalysed reaction is Endonucleolytic cleavage of RNA, removing 5'-extranucleotides from tRNA precursor.. Its function is as follows. RNaseP catalyzes the removal of the 5'-leader sequence from pre-tRNA to produce the mature 5'-terminus. It can also cleave other RNA substrates such as 4.5S RNA. The protein component plays an auxiliary but essential role in vivo by binding to the 5'-leader sequence and broadening the substrate specificity of the ribozyme. The polypeptide is Ribonuclease P protein component (Clostridium botulinum (strain Eklund 17B / Type B)).